Consider the following 229-residue polypeptide: Enolase-phosphatase E1 (229 aa).

It belongs to the HAD-like hydrolase superfamily. MasA/MtnC family. Monomer. Mg(2+) is required as a cofactor.

The enzyme catalyses 5-methylsulfanyl-2,3-dioxopentyl phosphate + H2O = 1,2-dihydroxy-5-(methylsulfanyl)pent-1-en-3-one + phosphate. It functions in the pathway amino-acid biosynthesis; L-methionine biosynthesis via salvage pathway; L-methionine from S-methyl-5-thio-alpha-D-ribose 1-phosphate: step 3/6. The protein operates within amino-acid biosynthesis; L-methionine biosynthesis via salvage pathway; L-methionine from S-methyl-5-thio-alpha-D-ribose 1-phosphate: step 4/6. Its function is as follows. Bifunctional enzyme that catalyzes the enolization of 2,3-diketo-5-methylthiopentyl-1-phosphate (DK-MTP-1-P) into the intermediate 2-hydroxy-3-keto-5-methylthiopentenyl-1-phosphate (HK-MTPenyl-1-P), which is then dephosphorylated to form the acireductone 1,2-dihydroxy-3-keto-5-methylthiopentene (DHK-MTPene). The protein is Enolase-phosphatase E1 of Yersinia pseudotuberculosis serotype IB (strain PB1/+).